The sequence spans 147 residues: ATP synthase subunit 9, mitochondrial (147 aa).

The transit peptide at 1-66 (MASTRVLASR…TTRQAFQKRA (66 aa)) directs the protein to the mitochondrion. Helical transmembrane passes span 86 to 106 (SAAI…AALL) and 123 to 143 (AILG…VALM).

The protein belongs to the ATPase C chain family. In terms of assembly, F-type ATPases have 2 components, CF(1) - the catalytic core - and CF(0) - the membrane proton channel. CF(1) has five subunits: alpha(3), beta(3), gamma(1), delta(1), epsilon(1). CF(0) has three main subunits: a, b and c.

The protein resides in the mitochondrion membrane. Mitochondrial membrane ATP synthase (F(1)F(0) ATP synthase or Complex V) produces ATP from ADP in the presence of a proton gradient across the membrane which is generated by electron transport complexes of the respiratory chain. F-type ATPases consist of two structural domains, F(1) - containing the extramembraneous catalytic core and F(0) - containing the membrane proton channel, linked together by a central stalk and a peripheral stalk. During catalysis, ATP synthesis in the catalytic domain of F(1) is coupled via a rotary mechanism of the central stalk subunits to proton translocation. Part of the complex F(0) domain. A homomeric c-ring of probably 10 subunits is part of the complex rotary element. In Neurospora crassa (strain ATCC 24698 / 74-OR23-1A / CBS 708.71 / DSM 1257 / FGSC 987), this protein is ATP synthase subunit 9, mitochondrial (oli).